The primary structure comprises 362 residues: DNA polymerase IV (362 aa).

The UmuC domain maps to 6–187 (IIHVDMDAFY…LPVSSFHGVG (182 aa)). Mg(2+) contacts are provided by Asp-10 and Asp-105. Residue Glu-106 is part of the active site.

This sequence belongs to the DNA polymerase type-Y family. In terms of assembly, monomer. Requires Mg(2+) as cofactor.

The protein resides in the cytoplasm. It carries out the reaction DNA(n) + a 2'-deoxyribonucleoside 5'-triphosphate = DNA(n+1) + diphosphate. Poorly processive, error-prone DNA polymerase involved in untargeted mutagenesis. Copies undamaged DNA at stalled replication forks, which arise in vivo from mismatched or misaligned primer ends. These misaligned primers can be extended by PolIV. Exhibits no 3'-5' exonuclease (proofreading) activity. May be involved in translesional synthesis, in conjunction with the beta clamp from PolIII. In Leptospira interrogans serogroup Icterohaemorrhagiae serovar Lai (strain 56601), this protein is DNA polymerase IV.